The primary structure comprises 358 residues: Probable anti-sigma-M factor YhdL (358 aa).

Residues 74 to 96 traverse the membrane as a helical segment; it reads ISVLAVISTLMILPLCTLGSYLY.

As to quaternary structure, the N-terminus of YhdL interacts with sigma-M. YhdL interacts specifically with YhdK.

The protein localises to the membrane. This is Probable anti-sigma-M factor YhdL (yhdL) from Bacillus subtilis (strain 168).